Here is a 439-residue protein sequence, read N- to C-terminus: Protein pop-1 (439 aa).

The interval 1–38 (MMADEELGDEVKVFRRDEDADDDPMISGETSEQQLADD) is disordered. The segment covering 9–18 (DEVKVFRRDE) has biased composition (basic and acidic residues). An involved in nuclear asymmetry region spans residues 87-138 (SGLPIMFPMVVPQYLSPNPNINMMNMMTMRAAMAGAPLSPAFPAMFSPNPLF). Phosphoserine; by LIT1 is present on Ser125. A DNA-binding region (HMG box) is located at residues 199–269 (IKKPLNAFMW…SHKEKYPQWS (71 aa)). Residues 254 to 265 (AKKDRESHKEKY) show a composition bias toward basic and acidic residues. Disordered regions lie at residues 254–298 (AKKD…NNDQ), 329–365 (RSGS…MPMN), and 385–439 (SAHL…VCTL). Over residues 277–286 (NKKKPKRKRD) the composition is skewed to basic residues. Low complexity-rich tracts occupy residues 346 to 365 (GCSS…MPMN) and 385 to 400 (SAHL…SGTS). A compositionally biased stretch (acidic residues) spans 409 to 420 (SESDVDEDEDID). Residues 422 to 439 (TITQQTQEYIMQESVCTL) show a composition bias toward polar residues.

This sequence belongs to the TCF/LEF family. Interacts with hda-1. Interacts with bar-1. Interacts with par-5; the interaction is direct and is enhanced by lit-1-mediated pop-1 phosphorylation. The interaction also leads to the subsequent nuclear export of pop-1. Interacts (when phosphorylated on Ser-125) with lit-1; the interaction is dependent on the beta-catenin-lit-1 complex. Interacts with wrm-1. Phosphorylated on Ser-125 by lit-1 in the beta-catenin-lit-1 complex. Phosphorylation promotes the interaction of pop-1 and par-5 and the subsequent translocation of pop-1 from the nucleus to the cytoplasm.

The protein resides in the nucleus. Its subcellular location is the cytoplasm. Part of the Wnt signaling pathway essential for the specification of the mesodermal cell fate in early embryos. Required for asymmetrical division of somatic gonadal precursor descendants which initiate axis formation required to control organ shape. Similarly, involved in asymmetrical division of seam cells, a stem cell-like lineage. Represses expression of target genes via its interaction with hda-1 histone deacetylase. Required for specification of the M lineage-derived coelomocyte and sex myoblast fate. Regulates coelomocyte fate by positively regulating proliferation and ceh-34 and possibly eya-1 expression in M.dlpa and M.drpa precursors. In Caenorhabditis briggsae, this protein is Protein pop-1.